A 372-amino-acid chain; its full sequence is Innexin shaking-B (372 aa).

The Cytoplasmic segment spans residues 1–21; sequence MLDIFRGLKNLVKVSHVKTDS. A helical membrane pass occupies residues 22 to 42; the sequence is IVFRLHYSITVMILMSFSLII. Topologically, residues 43 to 110 are extracellular; sequence TTRQYVGNPI…PADKKHYKYY (68 aa). Residues 111–131 form a helical membrane-spanning segment; sequence QWVCFCLFFQAILFYTPRWLW. Residues 132–182 are Cytoplasmic-facing; that stretch reads KSWEGGKIHALIMDLDIGICSEAEKKQKKKLLLDYLWENLRYHNWWAYRYY. The helical transmembrane segment at 183–203 threads the bilayer; the sequence is VCELLALINVIGQMFLMNRFF. The Extracellular portion of the chain corresponds to 204 to 267; it reads DGEFITFGLK…ILPLNVVNEK (64 aa). The helical transmembrane segment at 268 to 288 threads the bilayer; the sequence is IYIFLWFWFILLTFLTLLTLI. At 289 to 372 the chain is on the cytoplasmic side; sequence YRVVIIFSPR…PGLKGEIQDA (84 aa).

It belongs to the pannexin family. As to quaternary structure, monomer (isoform Lethal). In terms of tissue distribution, isoform Neural is expressed in synapses of giant fibers (GF), in a large thoracic cell in location of postsynaptic target and optic lobe lamina and medulla. Isoform Lethal is expressed in embryonic mesodermal derivatives. During metamorphosis, both isoforms are dynamically expressed in pupal nervous system.

It localises to the cell membrane. The protein localises to the cell junction. The protein resides in the gap junction. In terms of biological role, structural component of the gap junctions at electrical synapses in distal and mid-depth levels in the lamina. Isoform Lethal forms voltage sensitive intercellular channels through homotypic interactions. The polypeptide is Innexin shaking-B (shakB) (Drosophila melanogaster (Fruit fly)).